The primary structure comprises 118 residues: MRQNNLIAKINQEQLRDDVPEFRAGDTVRVHARIVEGSRERIQLFEGVVIKRKGAGIQATYTVRKISNGVGVERIFPLHSPRVAKIDVIRQGRVRRAKLYYLRELNGKAARIPERRRN.

It belongs to the bacterial ribosomal protein bL19 family.

Its function is as follows. This protein is located at the 30S-50S ribosomal subunit interface and may play a role in the structure and function of the aminoacyl-tRNA binding site. This chain is Large ribosomal subunit protein bL19, found in Levilactobacillus brevis (strain ATCC 367 / BCRC 12310 / CIP 105137 / JCM 1170 / LMG 11437 / NCIMB 947 / NCTC 947) (Lactobacillus brevis).